The following is a 106-amino-acid chain: UPF0449 protein C19orf25 homolog (106 aa).

Belongs to the UPF0449 family.

This chain is UPF0449 protein C19orf25 homolog, found in Xenopus tropicalis (Western clawed frog).